A 121-amino-acid polypeptide reads, in one-letter code: UPF0738 protein BPUM_1088 (121 aa).

This sequence belongs to the UPF0738 family.

In Bacillus pumilus (strain SAFR-032), this protein is UPF0738 protein BPUM_1088.